A 228-amino-acid chain; its full sequence is Sodium channel regulatory subunit beta-4 (228 aa).

A signal peptide spans 1-30 (MPGARDQGAARARWLGIGLLGLFLLPVSLS). Positions 31-148 (LEVSVGKATT…NDFQHQATIF (118 aa)) constitute an Ig-like C2-type domain. Over 31-162 (LEVSVGKATT…DKLEEVDNTV (132 aa)) the chain is Extracellular. Residues Asn45, Asn71, and Asn113 are each glycosylated (N-linked (GlcNAc...) asparagine). The cysteines at positions 53 and 131 are disulfide-linked. Residues 163 to 183 (TLIILGVVGGVIGLLIFILLV) form a helical membrane-spanning segment. Residues 184–228 (KKFIAFIIKKTQEKKKECLVSSSGNDNTENGLPGSKAEEKAPTKV) lie on the Cytoplasmic side of the membrane. Residues 198-228 (KKECLVSSSGNDNTENGLPGSKAEEKAPTKV) form a disordered region. Polar residues predominate over residues 203–213 (VSSSGNDNTEN). Basic and acidic residues predominate over residues 219–228 (KAEEKAPTKV).

This sequence belongs to the sodium channel auxiliary subunit SCN4B (TC 8.A.17) family. In terms of assembly, a voltage-gated sodium (Nav) channel consists of an ion-conducting pore-forming alpha subunit functional on its own that is regulated by one or more beta subunits. The beta subunit SCN4B is disulfide-linked to the pore-forming alpha subunit. Interacts with SCN1A; regulatory subunit of SCN1A/Nav1.1. Interacts with SCN2A; regulatory subunit of SCN2A/Nav1.2. Contains an interchain disulfide bond with SCN2A.

The protein resides in the cell membrane. Regulatory subunit of multiple voltage-gated sodium (Nav) channels directly mediating the depolarization of excitable membranes. Navs, also called VGSCs (voltage-gated sodium channels) or VDSCs (voltage-dependent sodium channels), operate by switching between closed and open conformations depending on the voltage difference across the membrane. In the open conformation they allow Na(+) ions to selectively pass through the pore, along their electrochemical gradient. The influx of Na+ ions provokes membrane depolarization, initiating the propagation of electrical signals throughout cells and tissues. The accessory beta subunits participate in localization and functional modulation of the Nav channels. Modulates the activity of SCN1A/Nav1.1. Modulates the activity of SCN2A/Nav1.2. The sequence is that of Sodium channel regulatory subunit beta-4 from Bos taurus (Bovine).